A 202-amino-acid polypeptide reads, in one-letter code: T-cell surface glycoprotein CD3 epsilon chain (202 aa).

The N-terminal stretch at 1–21 is a signal peptide; sequence MPSGSLWRVLGLCLLSVGAWG. At 22-125 the chain is on the extracellular side; that stretch reads QEDNEDPLEP…NCVEVDTMTA (104 aa). The 75-residue stretch at 33-107 folds into the Ig-like domain; that stretch reads PQTSASARYK…TSNSLEKNYL (75 aa). The cysteines at positions 54 and 96 are disulfide-linked. The helical transmembrane segment at 126 to 146 threads the bilayer; it reads VAIVVADVCITLGFLLLVYYW. Topologically, residues 147–202 are cytoplasmic; the sequence is SKNKKASSVTMMRGPGAGGRPRGQNKEKPPPVPNPDYEPIRKGQQDLYSGLNQRGI. The segment at 156–202 is disordered; it reads TMMRGPGAGGRPRGQNKEKPPPVPNPDYEPIRKGQQDLYSGLNQRGI. An NUMB-binding region region spans residues 170–187; the sequence is QNKEKPPPVPNPDYEPIR. The 28-residue stretch at 173-200 folds into the ITAM domain; that stretch reads EKPPPVPNPDYEPIRKGQQDLYSGLNQR. Positions 174–181 are proline-rich sequence; it reads KPPPVPNP. Phosphotyrosine occurs at positions 183 and 194. Residues 192-202 are compositionally biased toward polar residues; that stretch reads DLYSGLNQRGI.

The TCR-CD3 complex is composed of a CD3D/CD3E and a CD3G/CD3E heterodimers that preferentially associate with TCRalpha and TCRbeta, respectively, to form TCRalpha/CD3E/CD3G and TCRbeta/CD3G/CD3E trimers. In turn, the hexamer interacts with CD3Z homodimer to form the TCR-CD3 complex. Alternatively, TCRalpha and TCRbeta can be replaced by TCRgamma and TCRdelta. Interacts with CD6. Interacts (via Proline-rich sequence) with NCK1; the interaction is ligand dependent but independent of tyrosine kinase activation. Post-translationally, phosphorylated on Tyr residues after T-cell receptor triggering by LCK in association with CD4/CD8.

It is found in the cell membrane. Part of the TCR-CD3 complex present on T-lymphocyte cell surface that plays an essential role in adaptive immune response. When antigen presenting cells (APCs) activate T-cell receptor (TCR), TCR-mediated signals are transmitted across the cell membrane by the CD3 chains CD3D, CD3E, CD3G and CD3Z. All CD3 chains contain immunoreceptor tyrosine-based activation motifs (ITAMs) in their cytoplasmic domain. Upon TCR engagement, these motifs become phosphorylated by Src family protein tyrosine kinases LCK and FYN, resulting in the activation of downstream signaling pathways. In addition of this role of signal transduction in T-cell activation, CD3E plays an essential role in correct T-cell development. Also participates in internalization and cell surface down-regulation of TCR-CD3 complexes via endocytosis sequences present in CD3E cytosolic region. In addition to its role as a TCR coreceptor, it serves as a receptor for ITPRIPL1. Ligand recognition inhibits T-cell activation by promoting interaction with NCK1, which prevents CD3E-ZAP70 interaction and blocks the ERK-NFkB signaling cascade and calcium influx. The chain is T-cell surface glycoprotein CD3 epsilon chain (CD3E) from Felis catus (Cat).